Consider the following 142-residue polypeptide: Glia maturation factor beta (142 aa).

N-acetylserine is present on serine 2. The region spanning 4 to 139 (SLVVCDVAED…TEEWLREKLG (136 aa)) is the ADF-H domain.

The protein belongs to the actin-binding proteins ADF family. GMF subfamily. Post-translationally, phosphorylated; stimulated by phorbol ester.

Functionally, this protein causes differentiation of brain cells, stimulation of neural regeneration, and inhibition of proliferation of tumor cells. The sequence is that of Glia maturation factor beta (Gmfb) from Mus musculus (Mouse).